Consider the following 326-residue polypeptide: Guanine nucleotide-binding protein subunit beta-like protein 1 (326 aa).

WD repeat units lie at residues 17–61 (GTQS…IVTT), 64–104 (GHGG…NTIM), 159–202 (ARPG…VCSQ), 205–244 (CHEE…SLQV), 250–291 (LTNP…AVLA), and 292–325 (FHSA…LYPC).

Expressed at low levels in most tissues and highly expressed in adult testis. Widely expressed in adult brain with striking regional distribution in forebrain, midbrain, and hindbrain structures, including the thalamus, hypothalamus, amygdala, hippocampus, pons.

The protein resides in the cytoplasm. Its subcellular location is the nucleus. Functionally, acts as a critical regulator of DNA damage response (DDR) signaling via specifically regulating phosphatidylinositol 3-kinase-related protein kinase (PIKK) family proteins. The polypeptide is Guanine nucleotide-binding protein subunit beta-like protein 1 (Gnb1l) (Mus musculus (Mouse)).